The chain runs to 483 residues: Acetyl-coenzyme A carboxylase carboxyl transferase subunit beta, chloroplastic (483 aa).

Positions 219–483 (LWVQCENCYG…LHTFFPLNQN (265 aa)) constitute a CoA carboxyltransferase N-terminal domain. Zn(2+) is bound by residues Cys223, Cys226, Cys242, and Cys245. Residues 223–245 (CENCYGLNYKKFFKSKMNLCEQC) form a C4-type zinc finger.

This sequence belongs to the AccD/PCCB family. In terms of assembly, acetyl-CoA carboxylase is a heterohexamer composed of biotin carboxyl carrier protein, biotin carboxylase and 2 subunits each of ACCase subunit alpha and ACCase plastid-coded subunit beta (accD). The cofactor is Zn(2+).

It is found in the plastid. The protein localises to the chloroplast stroma. It carries out the reaction N(6)-carboxybiotinyl-L-lysyl-[protein] + acetyl-CoA = N(6)-biotinyl-L-lysyl-[protein] + malonyl-CoA. The protein operates within lipid metabolism; malonyl-CoA biosynthesis; malonyl-CoA from acetyl-CoA: step 1/1. Component of the acetyl coenzyme A carboxylase (ACC) complex. Biotin carboxylase (BC) catalyzes the carboxylation of biotin on its carrier protein (BCCP) and then the CO(2) group is transferred by the transcarboxylase to acetyl-CoA to form malonyl-CoA. This chain is Acetyl-coenzyme A carboxylase carboxyl transferase subunit beta, chloroplastic, found in Guizotia abyssinica (Niger).